Consider the following 436-residue polypeptide: Protein FAM83A (436 aa).

Positions 1-298 (MSRSRHVGKI…LYASSKPLMG (298 aa)) are DUF1669. Residues 73-95 (AQAKEPPDAPDSAGGAESGPRGL) are disordered. 4 positions are modified to phosphoserine: S301, S329, S350, and S359. Positions 302–371 (PRLVAPFQPN…APIPPTVPRL (70 aa)) are disordered. Residues 321 to 349 (LSGTSDSASDRTSSNPFSSLSTGSNAHNQ) show a composition bias toward polar residues. Over residues 350–359 (SLSTSSGPSS) the composition is skewed to low complexity.

Belongs to the FAM83 family. Directly interacts (via DUF1669) with casein kinase isoforms CSNK1A1, CSNK1A1L, CSNK1D and CSNK1E. In terms of processing, may be phosphorylated upon EGFR activation. Widely expressed, with relatively higher expression levels in adipose tissues, especially in epididymal and inguinal white adipose tissue (at protein level).

Its subcellular location is the cytoplasm. It is found in the mitochondrion. Its function is as follows. Involved in mitochondrial maintenance during adipogenesis. May be acting by playing a role in the maintenance of normal mitochondrial function. The sequence is that of Protein FAM83A from Mus musculus (Mouse).